Reading from the N-terminus, the 365-residue chain is Histidinol-phosphate aminotransferase (365 aa).

The segment at 1–21 (MSRPVPNPGILDIAPYTPGKS) is disordered. At Lys-221 the chain carries N6-(pyridoxal phosphate)lysine.

The protein belongs to the class-II pyridoxal-phosphate-dependent aminotransferase family. Histidinol-phosphate aminotransferase subfamily. In terms of assembly, homodimer. Pyridoxal 5'-phosphate is required as a cofactor.

It carries out the reaction L-histidinol phosphate + 2-oxoglutarate = 3-(imidazol-4-yl)-2-oxopropyl phosphate + L-glutamate. Its pathway is amino-acid biosynthesis; L-histidine biosynthesis; L-histidine from 5-phospho-alpha-D-ribose 1-diphosphate: step 7/9. This Rhodopseudomonas palustris (strain ATCC BAA-98 / CGA009) protein is Histidinol-phosphate aminotransferase.